The sequence spans 102 residues: MIPGEILTEPGQIELNVGRPTLTIAVVNEGDRPIQVGSHYHFAEANNALVFDRELATGYRLNIPAGNAVRFEPGMRRTVELVAVGGERRIFGFQGKVMGALK.

Belongs to the urease beta subunit family. Heterotrimer of UreA (gamma), UreB (beta) and UreC (alpha) subunits. Three heterotrimers associate to form the active enzyme.

The protein resides in the cytoplasm. The catalysed reaction is urea + 2 H2O + H(+) = hydrogencarbonate + 2 NH4(+). The protein operates within nitrogen metabolism; urea degradation; CO(2) and NH(3) from urea (urease route): step 1/1. The chain is Urease subunit beta from Bordetella parapertussis (strain 12822 / ATCC BAA-587 / NCTC 13253).